Consider the following 429-residue polypeptide: 3-phosphoshikimate 1-carboxyvinyltransferase (429 aa).

Lysine 20, serine 21, and arginine 25 together coordinate 3-phosphoshikimate. Lysine 20 lines the phosphoenolpyruvate pocket. Positions 89 and 118 each coordinate phosphoenolpyruvate. The 3-phosphoshikimate site is built by serine 164, serine 165, glutamine 166, serine 192, aspartate 311, and lysine 338. Residue glutamine 166 coordinates phosphoenolpyruvate. The Proton acceptor role is filled by aspartate 311. Phosphoenolpyruvate contacts are provided by arginine 342 and arginine 384.

This sequence belongs to the EPSP synthase family. As to quaternary structure, monomer.

The protein resides in the cytoplasm. The catalysed reaction is 3-phosphoshikimate + phosphoenolpyruvate = 5-O-(1-carboxyvinyl)-3-phosphoshikimate + phosphate. Its pathway is metabolic intermediate biosynthesis; chorismate biosynthesis. Its function is as follows. Catalyzes the transfer of the enolpyruvyl moiety of phosphoenolpyruvate (PEP) to the 5-hydroxyl of shikimate-3-phosphate (S3P) to produce enolpyruvyl shikimate-3-phosphate and inorganic phosphate. In Methanococcus maripaludis (strain DSM 14266 / JCM 13030 / NBRC 101832 / S2 / LL), this protein is 3-phosphoshikimate 1-carboxyvinyltransferase.